The chain runs to 196 residues: Holliday junction branch migration complex subunit RuvA (196 aa).

The segment at 1–64 is domain I; the sequence is MIDRLRGQLV…EDAMLLFGFA (64 aa). A domain II region spans residues 65–143; that stretch reads TREEREAFDA…AAAGGGGGVA (79 aa). Positions 144-153 are flexible linker; that stretch reads AGEGDGPFME. Residues 153-196 are domain III; sequence EAREALTGLGYSLEEAERALRDVPPQETVEQYIKAALRKIGGRR.

It belongs to the RuvA family. Homotetramer. Forms an RuvA(8)-RuvB(12)-Holliday junction (HJ) complex. HJ DNA is sandwiched between 2 RuvA tetramers; dsDNA enters through RuvA and exits via RuvB. An RuvB hexamer assembles on each DNA strand where it exits the tetramer. Each RuvB hexamer is contacted by two RuvA subunits (via domain III) on 2 adjacent RuvB subunits; this complex drives branch migration. In the full resolvosome a probable DNA-RuvA(4)-RuvB(12)-RuvC(2) complex forms which resolves the HJ.

It localises to the cytoplasm. In terms of biological role, the RuvA-RuvB-RuvC complex processes Holliday junction (HJ) DNA during genetic recombination and DNA repair, while the RuvA-RuvB complex plays an important role in the rescue of blocked DNA replication forks via replication fork reversal (RFR). RuvA specifically binds to HJ cruciform DNA, conferring on it an open structure. The RuvB hexamer acts as an ATP-dependent pump, pulling dsDNA into and through the RuvAB complex. HJ branch migration allows RuvC to scan DNA until it finds its consensus sequence, where it cleaves and resolves the cruciform DNA. This chain is Holliday junction branch migration complex subunit RuvA, found in Rubrobacter xylanophilus (strain DSM 9941 / JCM 11954 / NBRC 16129 / PRD-1).